We begin with the raw amino-acid sequence, 405 residues long: Argininosuccinate synthase (405 aa).

12–20 (AYSGGLDTS) contacts ATP. Residues Tyr90 and Ser95 each contribute to the L-citrulline site. Gly120 serves as a coordination point for ATP. Positions 122, 126, and 127 each coordinate L-aspartate. Asn126 is an L-citrulline binding site. Arg130, Ser179, Ser188, Glu265, and Tyr277 together coordinate L-citrulline.

This sequence belongs to the argininosuccinate synthase family. Type 1 subfamily. In terms of assembly, homotetramer.

Its subcellular location is the cytoplasm. It carries out the reaction L-citrulline + L-aspartate + ATP = 2-(N(omega)-L-arginino)succinate + AMP + diphosphate + H(+). The protein operates within amino-acid biosynthesis; L-arginine biosynthesis; L-arginine from L-ornithine and carbamoyl phosphate: step 2/3. The polypeptide is Argininosuccinate synthase (Clostridium perfringens (strain 13 / Type A)).